The chain runs to 127 residues: Ribonuclease P protein component 1 (127 aa).

It belongs to the eukaryotic/archaeal RNase P protein component 1 family. In terms of assembly, consists of a catalytic RNA component and at least 5 protein subunits. Forms a heterodimeric subcomplex with Rnp4. Reconstituted enzyme missing individual protein subunits is suboptimally active, showing each subunit contributes to optimization of activity.

The protein localises to the cytoplasm. The enzyme catalyses Endonucleolytic cleavage of RNA, removing 5'-extranucleotides from tRNA precursor.. Its function is as follows. Part of ribonuclease P (RNase P), a protein complex that generates mature tRNA molecules by cleaving their 5'-ends. Binds RNase P RNA. The polypeptide is Ribonuclease P protein component 1 (Pyrococcus horikoshii (strain ATCC 700860 / DSM 12428 / JCM 9974 / NBRC 100139 / OT-3)).